Consider the following 480-residue polypeptide: ATP synthase subunit beta, chloroplastic (480 aa).

ATP is bound at residue 161-168 (GGAGVGKT).

It belongs to the ATPase alpha/beta chains family. In terms of assembly, F-type ATPases have 2 components, CF(1) - the catalytic core - and CF(0) - the membrane proton channel. CF(1) has five subunits: alpha(3), beta(3), gamma(1), delta(1), epsilon(1). CF(0) has four main subunits: a(1), b(1), b'(1) and c(9-12).

It is found in the plastid. Its subcellular location is the chloroplast thylakoid membrane. The enzyme catalyses ATP + H2O + 4 H(+)(in) = ADP + phosphate + 5 H(+)(out). Functionally, produces ATP from ADP in the presence of a proton gradient across the membrane. The catalytic sites are hosted primarily by the beta subunits. The sequence is that of ATP synthase subunit beta, chloroplastic from Euglena gracilis.